A 261-amino-acid polypeptide reads, in one-letter code: Homeobox protein ceh-33 (261 aa).

Positions 133-192 (GEETSYCFRDKSRVLLRDWYCRNSYPSPREKRELAEKTHLTVTQVSNWFKNRRQRDRAGV) form a DNA-binding region, homeobox.

It belongs to the SIX/Sine oculis homeobox family.

Its subcellular location is the nucleus. This is Homeobox protein ceh-33 (ceh-33) from Caenorhabditis elegans.